The following is a 201-amino-acid chain: Large ribosomal subunit protein uL4 (201 aa).

Positions 44–66 (KAQKTRAEVRGGGKKPWRQKGTG) are disordered. Basic residues predominate over residues 55–66 (GGKKPWRQKGTG).

Belongs to the universal ribosomal protein uL4 family. As to quaternary structure, part of the 50S ribosomal subunit.

One of the primary rRNA binding proteins, this protein initially binds near the 5'-end of the 23S rRNA. It is important during the early stages of 50S assembly. It makes multiple contacts with different domains of the 23S rRNA in the assembled 50S subunit and ribosome. Its function is as follows. Forms part of the polypeptide exit tunnel. This chain is Large ribosomal subunit protein uL4, found in Alteromonas mediterranea (strain DSM 17117 / CIP 110805 / LMG 28347 / Deep ecotype).